A 263-amino-acid chain; its full sequence is tRNA pseudouridine synthase A (263 aa).

Catalysis depends on aspartate 51, which acts as the Nucleophile. Tyrosine 109 serves as a coordination point for substrate.

This sequence belongs to the tRNA pseudouridine synthase TruA family. As to quaternary structure, homodimer.

It carries out the reaction uridine(38/39/40) in tRNA = pseudouridine(38/39/40) in tRNA. Its function is as follows. Formation of pseudouridine at positions 38, 39 and 40 in the anticodon stem and loop of transfer RNAs. This chain is tRNA pseudouridine synthase A, found in Pseudoalteromonas atlantica (strain T6c / ATCC BAA-1087).